A 207-amino-acid polypeptide reads, in one-letter code: Ribosomal RNA small subunit methyltransferase G (207 aa).

Residues Gly74, Leu79, 125–126, and Arg140 contribute to the S-adenosyl-L-methionine site; that span reads VE.

This sequence belongs to the methyltransferase superfamily. RNA methyltransferase RsmG family.

The protein resides in the cytoplasm. It catalyses the reaction guanosine(527) in 16S rRNA + S-adenosyl-L-methionine = N(7)-methylguanosine(527) in 16S rRNA + S-adenosyl-L-homocysteine. In terms of biological role, specifically methylates the N7 position of guanine in position 527 of 16S rRNA. The polypeptide is Ribosomal RNA small subunit methyltransferase G (Shewanella loihica (strain ATCC BAA-1088 / PV-4)).